Here is a 305-residue protein sequence, read N- to C-terminus: MLFIKIEIIAKTLLIINKKYTEIKMDELNVVNNINHAGTWLIRNQELLLRYTINLTSAIIILVVGMFISKIISNGANQVLITRNIDATIAGFLSALMRYIIITFTFIAALGRIGVQTTSVIAILGAAGMAIGLALQGSLSNFAAGVLLVTLRPLKTEEYVDLGSVSGTVLNIHIFYTTLRTLDGKIVVVPNNKIISGNIINYSREPARRNEFIISVSYNSDIDLVIKILRSVIEKEERVIKDKDIIVGLSELAPSSLNFIVRCWSKNHDLNTVYWDLMAKFKKELDKNNINIPFPQLDVHVYKKK.

3 helical membrane passes run 52-72 (TINLTSAIIILVVGMFISKII), 89-109 (IAGFLSALMRYIIITFTFIAA), and 120-140 (VIAILGAAGMAIGLALQGSLS).

This sequence belongs to the MscS (TC 1.A.23) family.

The protein localises to the cell membrane. This is an uncharacterized protein from Buchnera aphidicola subsp. Acyrthosiphon pisum (strain APS) (Acyrthosiphon pisum symbiotic bacterium).